The primary structure comprises 137 residues: Small ribosomal subunit protein uS11 (137 aa).

The interval 116–137 (EDVTPIPHDGTRRPGGKRGRRV) is disordered.

It belongs to the universal ribosomal protein uS11 family. In terms of assembly, part of the 30S ribosomal subunit.

Located on the platform of the 30S subunit. This chain is Small ribosomal subunit protein uS11, found in Methanopyrus kandleri (strain AV19 / DSM 6324 / JCM 9639 / NBRC 100938).